We begin with the raw amino-acid sequence, 178 residues long: Mediator of RNA polymerase II transcription subunit 21 (178 aa).

Residues 36–91 (DDDDVNSYSNMAANAPLPQSQQQRQQQKKQQEPQQEIEQPQQQSNPESKSISPPKE) are disordered. Residues 67–85 (EPQQEIEQPQQQSNPESKS) show a composition bias toward low complexity. Residues 128–169 (NEQMNLINELSDKLQAIEEERIQKIKEKDNLLNLLESMIKEV) adopt a coiled-coil conformation.

The protein belongs to the Mediator complex subunit 21 family. Component of the Mediator complex.

The protein localises to the nucleus. Component of the Mediator complex, a coactivator involved in the regulated transcription of nearly all RNA polymerase II-dependent genes. Mediator functions as a bridge to convey information from gene-specific regulatory proteins to the basal RNA polymerase II transcription machinery. Mediator is recruited to promoters by direct interactions with regulatory proteins and serves as a scaffold for the assembly of a functional preinitiation complex with RNA polymerase II and the general transcription factors. The polypeptide is Mediator of RNA polymerase II transcription subunit 21 (SRB7) (Candida albicans (strain SC5314 / ATCC MYA-2876) (Yeast)).